Consider the following 432-residue polypeptide: Septin-11 (432 aa).

Ala-2 bears the N-acetylalanine mark. The residue at position 9 (Ser-9) is a Phosphoserine. Residues Gln-38–Glu-304 form the Septin-type G domain. The segment at Gly-48–Ser-55 is G1 motif. Residues Gly-48–Ser-55, Gly-103, Lys-184–Glu-192, Gly-238, and Arg-253 each bind GTP. Positions Asp-100 to Gly-103 are G3 motif. Residues Ala-183–Asp-186 form a G4 motif region. Residues Gln-320–Gly-413 are a coiled coil. Positions Gln-403–Gln-416 are enriched in low complexity. The interval Gln-403–Glu-432 is disordered.

The protein belongs to the TRAFAC class TrmE-Era-EngA-EngB-Septin-like GTPase superfamily. Septin GTPase family. Septins polymerize into heterooligomeric protein complexes that form filaments, and can associate with cellular membranes, actin filaments and microtubules. Forms homooligomers. GTPase activity is required for filament formation. Interacts with SEPTIN7, SEPTIN9 and SEPTIN12.

It localises to the cytoplasm. It is found in the cytoskeleton. The protein resides in the synapse. The protein localises to the cell projection. Its subcellular location is the dendritic spine. It localises to the axon. In terms of biological role, filament-forming cytoskeletal GTPase. May play a role in cytokinesis (Potential). May play a role in the cytoarchitecture of neurons, including dendritic arborization and dendritic spines, and in GABAergic synaptic connectivity. In Macaca fascicularis (Crab-eating macaque), this protein is Septin-11.